A 171-amino-acid polypeptide reads, in one-letter code: GTP-dependent dephospho-CoA kinase (171 aa).

Positions 49, 51, 68, and 122 each coordinate GTP.

This sequence belongs to the GTP-dependent DPCK family.

It carries out the reaction 3'-dephospho-CoA + GTP = GDP + CoA + H(+). It participates in cofactor biosynthesis; coenzyme A biosynthesis. Functionally, catalyzes the GTP-dependent phosphorylation of the 3'-hydroxyl group of dephosphocoenzyme A to form coenzyme A (CoA). This chain is GTP-dependent dephospho-CoA kinase, found in Hyperthermus butylicus (strain DSM 5456 / JCM 9403 / PLM1-5).